We begin with the raw amino-acid sequence, 299 residues long: ATP phosphoribosyltransferase (299 aa).

Belongs to the ATP phosphoribosyltransferase family. Long subfamily. Equilibrium between an active dimeric form, an inactive hexameric form and higher aggregates. Interconversion between the various forms is largely reversible and is influenced by the natural substrates and inhibitors of the enzyme. The cofactor is Mg(2+).

It localises to the cytoplasm. It carries out the reaction 1-(5-phospho-beta-D-ribosyl)-ATP + diphosphate = 5-phospho-alpha-D-ribose 1-diphosphate + ATP. Its pathway is amino-acid biosynthesis; L-histidine biosynthesis; L-histidine from 5-phospho-alpha-D-ribose 1-diphosphate: step 1/9. With respect to regulation, feedback inhibited by histidine. In terms of biological role, catalyzes the condensation of ATP and 5-phosphoribose 1-diphosphate to form N'-(5'-phosphoribosyl)-ATP (PR-ATP). Has a crucial role in the pathway because the rate of histidine biosynthesis seems to be controlled primarily by regulation of HisG enzymatic activity. This chain is ATP phosphoribosyltransferase, found in Shigella dysenteriae serotype 1 (strain Sd197).